Reading from the N-terminus, the 904-residue chain is MLGIGTISRKIFGSPNDRKVKATRPVIAQINALEPEFEKLSDEGLKEKTEEFRKRALEGESLDALLPEAFANCREAARRALGLRAFDTQLMGAVFLHQGNIAEQKTGEGKTLTATFAAYLNGLTGRGVHIVTVNEYLAKRDAAWMGSVFGALGLTTGVAYSDMPEDEKRKAYASDITYATNNELGFDYLRDNMKSELDQIYQKQHNFAIVDEVDSILIDEARTPLIISGPSQDRSEMYKTVDAVIPQVRDDHFELDEKTRNVTFTDEGNEFLEEILHAQGLLEEGQSLYDPESTTVVHHVNQGLRAHKLFQRDKDYIVRDDNVVLIDEFTGRMMPGRRLSDGLHQAIEAKEGVDIKPENITLASVTFQNYFRLYDKLSGMTGTALTEAEEFMEIYGLGVVEVPTNKPIARVDEDDQVYRTAREKYEAMLEKIKESNAKGQPVLVGTTSIEKSEMLSNMLKQAGITHNVLNARQHEQEAQIVADAGKYGAVTIATNMAGRGTDIQLGGNVDLQVMNALTADPDADPEALRASIEAQHADEKAKVLAAGGLYVLASERHESRRIDNQLRGRSGRQGDPGRSSFFLSLEDDLMRIFGSERLEKVLKTLGLKEGEAIVHPWVNKSLERAQSKVEGRNFDIRKQLLKFDDVMNEQRKVIFGQRREIMEAKDLSEITTDMRHQVIDDFIEQYLPPNTYADQWDAEGLYAAVQEQLGIDVPVMDWVEEEGVDDEAIRERLVEATDKLMTEKAGQFGAENMRNIEKQLLLQAIDTKWREHLLTLEHLRSVVGFRGYAQRDPLNEYKNESFQLFESMLDSLREDVTQKLSQIRPMTEEEQQAMIEQIRAQQAAAQAAAAGPTVSAQAGPVAGPADAAVAFDENDPSTWGNPGRNEPCPCQSGKKFKHCHGRLI.

Residues Gln89, 107–111, and Asp502 each bind ATP; that span reads GEGKT. Cys888, Cys890, Cys899, and His900 together coordinate Zn(2+).

The protein belongs to the SecA family. Monomer and homodimer. Part of the essential Sec protein translocation apparatus which comprises SecA, SecYEG and auxiliary proteins SecDF-YajC and YidC. It depends on Zn(2+) as a cofactor.

It is found in the cell inner membrane. The protein localises to the cytoplasm. The enzyme catalyses ATP + H2O + cellular proteinSide 1 = ADP + phosphate + cellular proteinSide 2.. Part of the Sec protein translocase complex. Interacts with the SecYEG preprotein conducting channel. Has a central role in coupling the hydrolysis of ATP to the transfer of proteins into and across the cell membrane, serving both as a receptor for the preprotein-SecB complex and as an ATP-driven molecular motor driving the stepwise translocation of polypeptide chains across the membrane. In Roseobacter denitrificans (strain ATCC 33942 / OCh 114) (Erythrobacter sp. (strain OCh 114)), this protein is Protein translocase subunit SecA.